Here is a 240-residue protein sequence, read N- to C-terminus: MAPK-interacting and spindle-stabilizing protein-like (240 aa).

Positions 1–240 (MSDEFSLADA…PMPGGPHSYH (240 aa)) are disordered. S2 carries the N-acetylserine modification. 3 positions are modified to phosphoserine: S2, S6, and S15. Positions 16-26 (PAKTSAVSNTK) are enriched in polar residues. Residues 34-43 (WPGSNPWNNP) show a composition bias toward low complexity. 4 stretches are compositionally biased toward pro residues: residues 44–66 (SAPP…PFGP), 74–122 (SVPP…PELP), 159–185 (PNMP…PPVP), and 193–202 (AWGPPAPYPA).

This sequence belongs to the MISS family.

The chain is MAPK-interacting and spindle-stabilizing protein-like (MAPK1IP1L) from Bos taurus (Bovine).